The primary structure comprises 215 residues: Large ribosomal subunit protein uL1 (215 aa).

This sequence belongs to the universal ribosomal protein uL1 family. As to quaternary structure, part of the 50S ribosomal subunit.

Binds directly to 23S rRNA. Probably involved in E site tRNA release. Functionally, protein L1 is also a translational repressor protein, it controls the translation of its operon by binding to its mRNA. This chain is Large ribosomal subunit protein uL1, found in Cenarchaeum symbiosum (strain A).